A 413-amino-acid polypeptide reads, in one-letter code: von Willebrand factor A domain-containing protein 1 (413 aa).

The N-terminal stretch at 1 to 20 (MLPWTVIGLALSLRLARSGA) is a signal peptide. In terms of domain architecture, VWFA spans 32–211 (DLLFLLDSSA…ALRGSILDAM (180 aa)). Phosphoserine occurs at positions 72, 78, and 91. 2 consecutive Fibronectin type-III domains span residues 212 to 302 (WPQQ…TLPE) and 305 to 395 (GPEL…TPEG). An N-linked (GlcNAc...) asparagine glycan is attached at Asn-262. Positions 385–413 (ALSAKACTPEGERSRAPRPQPQRTGGREP) are disordered.

In terms of assembly, homodimer or homomultimer; disulfide-linked. Interacts with HSPG2. N-glycosylated.

Its subcellular location is the secreted. The protein resides in the extracellular space. It localises to the extracellular matrix. The protein localises to the basement membrane. Functionally, promotes matrix assembly. Involved in the organization of skeletal muscles and in the formation of neuromuscular junctions. The chain is von Willebrand factor A domain-containing protein 1 (VWA1) from Bos taurus (Bovine).